The following is a 264-amino-acid chain: Apolipoprotein A-I (264 aa).

The N-terminal stretch at 1–18 is a signal peptide; it reads MKAVVLAVAVLFLTGSQA. Tandem repeats lie at residues 67-88 and 89-110. The tract at residues 67–264 is 10 X approximate tandem repeats; it reads LKLLDNWDTL…DQATKQLTAQ (198 aa). At methionine 109 the chain carries Methionine sulfoxide. The stretch at 111-121 is one 3; half-length repeat; that stretch reads KDLQEVKQKVQ. 5 repeat units span residues 122–143, 144–165, 166–187, 188–207, and 208–229. Residues 230-240 form a 9; half-length repeat; it reads PALEDLRQGLL. The stretch at 241–264 is repeat 10; the sequence is PVLESLKASILSSIDQATKQLTAQ.

It belongs to the apolipoprotein A1/A4/E family. As to quaternary structure, homodimer. Interacts with APOA1BP and CLU. Component of a sperm activating protein complex (SPAP), consisting of APOA1, an immunoglobulin heavy chain, an immunoglobulin light chain and albumin. Interacts with NDRG1. Interacts with SCGB3A2. Interacts with NAXE and YJEFN3. In terms of processing, glycosylated. Palmitoylated. Post-translationally, phosphorylation sites are present in the extracellular medium.

The protein localises to the secreted. Its function is as follows. Participates in the reverse transport of cholesterol from tissues to the liver for excretion by promoting cholesterol efflux from tissues and by acting as a cofactor for the lecithin cholesterol acyltransferase (LCAT). As part of the SPAP complex, activates spermatozoa motility. The sequence is that of Apolipoprotein A-I (APOA1) from Chinchilla lanigera (Long-tailed chinchilla).